Reading from the N-terminus, the 416-residue chain is Gamma-glutamyl phosphate reductase (416 aa).

Belongs to the gamma-glutamyl phosphate reductase family.

It localises to the cytoplasm. It carries out the reaction L-glutamate 5-semialdehyde + phosphate + NADP(+) = L-glutamyl 5-phosphate + NADPH + H(+). Its pathway is amino-acid biosynthesis; L-proline biosynthesis; L-glutamate 5-semialdehyde from L-glutamate: step 2/2. Its function is as follows. Catalyzes the NADPH-dependent reduction of L-glutamate 5-phosphate into L-glutamate 5-semialdehyde and phosphate. The product spontaneously undergoes cyclization to form 1-pyrroline-5-carboxylate. This chain is Gamma-glutamyl phosphate reductase, found in Vibrio vulnificus (strain YJ016).